A 450-amino-acid polypeptide reads, in one-letter code: Ribosomal protein uS12 methylthiotransferase RimO (450 aa).

The 117-residue stretch at 7–123 folds into the MTTase N-terminal domain; sequence QKVSMVSLGC…IAEILAEKSG (117 aa). [4Fe-4S] cluster-binding residues include Cys16, Cys52, Cys86, Cys161, Cys165, and Cys168. The Radical SAM core domain maps to 147-377; the sequence is SSPAWFSYLK…MRIQARLSFK (231 aa). Residues 380-448 enclose the TRAM domain; it reads RELIGTTEQV…DYDLIGEIQE (69 aa).

This sequence belongs to the methylthiotransferase family. RimO subfamily. [4Fe-4S] cluster is required as a cofactor.

Its subcellular location is the cytoplasm. The catalysed reaction is L-aspartate(89)-[ribosomal protein uS12]-hydrogen + (sulfur carrier)-SH + AH2 + 2 S-adenosyl-L-methionine = 3-methylsulfanyl-L-aspartate(89)-[ribosomal protein uS12]-hydrogen + (sulfur carrier)-H + 5'-deoxyadenosine + L-methionine + A + S-adenosyl-L-homocysteine + 2 H(+). Its function is as follows. Catalyzes the methylthiolation of an aspartic acid residue of ribosomal protein uS12. The chain is Ribosomal protein uS12 methylthiotransferase RimO from Pelobacter propionicus (strain DSM 2379 / NBRC 103807 / OttBd1).